The primary structure comprises 208 residues: High frequency lysogenization protein HflD homolog (208 aa).

It belongs to the HflD family.

The protein resides in the cytoplasm. It is found in the cell inner membrane. This Photorhabdus laumondii subsp. laumondii (strain DSM 15139 / CIP 105565 / TT01) (Photorhabdus luminescens subsp. laumondii) protein is High frequency lysogenization protein HflD homolog.